The primary structure comprises 86 residues: Small ribosomal subunit protein uS17 (86 aa).

This sequence belongs to the universal ribosomal protein uS17 family. Part of the 30S ribosomal subunit.

In terms of biological role, one of the primary rRNA binding proteins, it binds specifically to the 5'-end of 16S ribosomal RNA. The sequence is that of Small ribosomal subunit protein uS17 from Streptococcus gordonii (strain Challis / ATCC 35105 / BCRC 15272 / CH1 / DL1 / V288).